We begin with the raw amino-acid sequence, 604 residues long: Aspartate--tRNA(Asp/Asn) ligase (604 aa).

E175 contributes to the L-aspartate binding site. Positions 199–202 (QMFK) are aspartate. R221 and H451 together coordinate L-aspartate. 221 to 223 (RDE) is a binding site for ATP. E485 provides a ligand contact to ATP. R492 contacts L-aspartate. 537–540 (GIDR) serves as a coordination point for ATP.

The protein belongs to the class-II aminoacyl-tRNA synthetase family. Type 1 subfamily. As to quaternary structure, homodimer.

Its subcellular location is the cytoplasm. It catalyses the reaction tRNA(Asx) + L-aspartate + ATP = L-aspartyl-tRNA(Asx) + AMP + diphosphate. Functionally, aspartyl-tRNA synthetase with relaxed tRNA specificity since it is able to aspartylate not only its cognate tRNA(Asp) but also tRNA(Asn). Reaction proceeds in two steps: L-aspartate is first activated by ATP to form Asp-AMP and then transferred to the acceptor end of tRNA(Asp/Asn). This Erythrobacter litoralis (strain HTCC2594) protein is Aspartate--tRNA(Asp/Asn) ligase.